Consider the following 860-residue polypeptide: Alanine--tRNA ligase (860 aa).

Positions 553, 557, 655, and 659 each coordinate Zn(2+).

This sequence belongs to the class-II aminoacyl-tRNA synthetase family. It depends on Zn(2+) as a cofactor.

It localises to the cytoplasm. It carries out the reaction tRNA(Ala) + L-alanine + ATP = L-alanyl-tRNA(Ala) + AMP + diphosphate. Its function is as follows. Catalyzes the attachment of alanine to tRNA(Ala) in a two-step reaction: alanine is first activated by ATP to form Ala-AMP and then transferred to the acceptor end of tRNA(Ala). Also edits incorrectly charged Ser-tRNA(Ala) and Gly-tRNA(Ala) via its editing domain. The sequence is that of Alanine--tRNA ligase from Legionella pneumophila (strain Corby).